Reading from the N-terminus, the 443-residue chain is Ribulose bisphosphate carboxylase large chain (443 aa).

Position 7 is an N6,N6,N6-trimethyllysine (Lys-7). 2 residues coordinate substrate: Asn-116 and Thr-166. Lys-168 (proton acceptor) is an active-site residue. Substrate is bound at residue Lys-170. 3 residues coordinate Mg(2+): Lys-194, Asp-196, and Glu-197. An N6-carboxylysine modification is found at Lys-194. The Proton acceptor role is filled by His-287. Substrate is bound by residues Arg-288, His-320, and Ser-372.

The protein belongs to the RuBisCO large chain family. Type I subfamily. Heterohexadecamer of 8 large chains and 8 small chains; disulfide-linked. The disulfide link is formed within the large subunit homodimers. Requires Mg(2+) as cofactor. In terms of processing, the disulfide bond which can form in the large chain dimeric partners within the hexadecamer appears to be associated with oxidative stress and protein turnover.

The protein localises to the plastid. The protein resides in the chloroplast. It carries out the reaction 2 (2R)-3-phosphoglycerate + 2 H(+) = D-ribulose 1,5-bisphosphate + CO2 + H2O. It catalyses the reaction D-ribulose 1,5-bisphosphate + O2 = 2-phosphoglycolate + (2R)-3-phosphoglycerate + 2 H(+). Its function is as follows. RuBisCO catalyzes two reactions: the carboxylation of D-ribulose 1,5-bisphosphate, the primary event in carbon dioxide fixation, as well as the oxidative fragmentation of the pentose substrate in the photorespiration process. Both reactions occur simultaneously and in competition at the same active site. This Abies sachalinensis (Sakhalin fir) protein is Ribulose bisphosphate carboxylase large chain.